The primary structure comprises 399 residues: Oligoribonuclease NrnB (399 aa).

Requires Mn(2+) as cofactor. The cofactor is Co(2+). Mg(2+) is required as a cofactor.

The protein localises to the cytoplasm. Functionally, degrades RNA oligonucleotides with a length of 5 nucleotides in a 3'- to 5'-direction. Less active on shorter RNA oligonucleotides and on those with a length of 24 nucleotides. Prefers RNA oligonucleotides containing adenines rather than cytosines. The protein is Oligoribonuclease NrnB (nrnB) of Bacillus subtilis (strain 168).